A 590-amino-acid chain; its full sequence is L-fucose isomerase (590 aa).

Active-site proton acceptor residues include Glu337 and Asp361. The Mn(2+) site is built by Glu337, Asp361, and His528.

Belongs to the L-fucose isomerase family. Mn(2+) is required as a cofactor.

Its subcellular location is the cytoplasm. The catalysed reaction is L-fucose = L-fuculose. The protein operates within carbohydrate degradation; L-fucose degradation; L-lactaldehyde and glycerone phosphate from L-fucose: step 1/3. Functionally, converts the aldose L-fucose into the corresponding ketose L-fuculose. This is L-fucose isomerase from Bacteroides fragilis (strain ATCC 25285 / DSM 2151 / CCUG 4856 / JCM 11019 / LMG 10263 / NCTC 9343 / Onslow / VPI 2553 / EN-2).